Reading from the N-terminus, the 650-residue chain is Fructose-1,6-bisphosphatase class 3 (650 aa).

This sequence belongs to the FBPase class 3 family. The cofactor is Mn(2+).

The catalysed reaction is beta-D-fructose 1,6-bisphosphate + H2O = beta-D-fructose 6-phosphate + phosphate. The protein operates within carbohydrate biosynthesis; gluconeogenesis. This chain is Fructose-1,6-bisphosphatase class 3, found in Finegoldia magna (strain ATCC 29328 / DSM 20472 / WAL 2508) (Peptostreptococcus magnus).